The chain runs to 961 residues: Ras-interacting protein 1 (961 aa).

A compositionally biased stretch (basic and acidic residues) spans 1–10 (MLSGERKEGG). Disordered stretches follow at residues 1-21 (MLSG…HLPV), 35-70 (LGRR…PHVE), and 96-116 (RGSG…QRWA). Residues 41-57 (SAASVKSSSSDTGSRSS) are compositionally biased toward low complexity. A compositionally biased stretch (pro residues) spans 59–68 (PLPPPPPPPH). Arginine 96 carries the omega-N-methylarginine modification. Gly residues predominate over residues 98–110 (SGAGGAGGPGTPG). A Ras-associating domain is found at 141–253 (PPGVLKIFAS…RRFELRGREE (113 aa)). Residues 261 to 352 (AFGAADADGT…MAPGAADAQM (92 aa)) are disordered. Serine 274 and serine 286 each carry phosphoserine. The span at 284–295 (AASGGAALASPG) shows a compositional bias: low complexity. Residues 296 to 307 (PGSGSGTPTGSG) show a composition bias toward gly residues. Low complexity predominate over residues 314-327 (NLSLRRSVSELSLQ). Serine 320, serine 322, serine 325, and serine 413 each carry phosphoserine. Positions 594–895 (GRLARLIKEA…PPAERDAVDT (302 aa)) constitute a Dilute domain.

As to quaternary structure, interacts with Ras family members that have been activated by GTP binding. Interacts with HRAS, RAP1A, RAP2, RRAS, RAF1 and RRAS2. Interacts with MYH9 and ARHGAP29. Detected in kidney, heart, skeletal muscle, small intestine and lung.

It localises to the cytoplasm. Its subcellular location is the perinuclear region. It is found in the golgi apparatus. The protein resides in the golgi stack. In terms of biological role, required for the proper formation of vascular structures that develop via both vasculogenesis and angiogenesis. Acts as a critical and vascular-specific regulator of GTPase signaling, cell architecture, and adhesion, which is essential for endothelial cell morphogenesis and blood vessel tubulogenesis. Regulates the activity of Rho GTPases in part by recruiting ARHGAP29 and suppressing RhoA signaling and dampening ROCK and MYH9 activities in endothelial cells. May act as effector for Golgi-bound HRAS and other Ras-like proteins. May promote HRAS-mediated transformation. Negative regulator of amino acid starvation-induced autophagy. The sequence is that of Ras-interacting protein 1 (Rasip1) from Mus musculus (Mouse).